We begin with the raw amino-acid sequence, 202 residues long: Large ribosomal subunit protein uL4 (202 aa).

A disordered region spans residues 45–71 (HAQKNRSEVSGSGKKPWRQKGTGRARV).

The protein belongs to the universal ribosomal protein uL4 family. In terms of assembly, part of the 50S ribosomal subunit.

One of the primary rRNA binding proteins, this protein initially binds near the 5'-end of the 23S rRNA. It is important during the early stages of 50S assembly. It makes multiple contacts with different domains of the 23S rRNA in the assembled 50S subunit and ribosome. In terms of biological role, forms part of the polypeptide exit tunnel. The polypeptide is Large ribosomal subunit protein uL4 (Buchnera aphidicola subsp. Baizongia pistaciae (strain Bp)).